The primary structure comprises 361 residues: G2/mitotic-specific cyclin-B (361 aa).

The protein belongs to the cyclin family. Cyclin AB subfamily.

In terms of biological role, essential for the control of the cell cycle at the G2/M (mitosis) transition. Interacts with the CDC2 protein kinase to form MPF. G2/M cyclins accumulate steadily during G2 and are abruptly destroyed at mitosis. The polypeptide is G2/mitotic-specific cyclin-B (Hydra vulgaris (Hydra)).